The following is a 115-amino-acid chain: Large ribosomal subunit protein bL19 (115 aa).

It belongs to the bacterial ribosomal protein bL19 family.

This protein is located at the 30S-50S ribosomal subunit interface and may play a role in the structure and function of the aminoacyl-tRNA binding site. The polypeptide is Large ribosomal subunit protein bL19 (Edwardsiella ictaluri (strain 93-146)).